The chain runs to 86 residues: Small ribosomal subunit protein bS16 (86 aa).

Belongs to the bacterial ribosomal protein bS16 family.

This Trichormus variabilis (strain ATCC 29413 / PCC 7937) (Anabaena variabilis) protein is Small ribosomal subunit protein bS16.